The chain runs to 301 residues: Probable alpha-L-glutamate ligase (301 aa).

The region spanning 104-287 (LQLLSRKGIG…VAGMIVEFIE (184 aa)) is the ATP-grasp domain. ATP-binding positions include K141, 178–179 (EF), D187, and 211–213 (RSN). Mg(2+)-binding residues include D248, E260, and N262. Mn(2+) contacts are provided by D248, E260, and N262.

This sequence belongs to the RimK family. Mg(2+) is required as a cofactor. Mn(2+) serves as cofactor.

In Teredinibacter turnerae (strain ATCC 39867 / T7901), this protein is Probable alpha-L-glutamate ligase.